The chain runs to 317 residues: (2S)-3-sulfopropanediol dehydratase activating enzyme (317 aa).

Residues 18–306 (HDGPGLRTEL…QMLAEYFNQR (289 aa)) form the Radical SAM core domain. [4Fe-4S] cluster is bound by residues C32, C36, C39, C58, C64, C67, C71, C92, C95, C98, and C102. 38 to 40 (WCS) lines the S-adenosyl-L-methionine pocket. 4Fe-4S ferredoxin-type domains lie at 49–82 (AQVG…FTRG) and 83–112 (KLTS…LWGK). S-adenosyl-L-methionine-binding positions include G142 and 191–193 (DIK).

It belongs to the organic radical-activating enzymes family. Requires [4Fe-4S] cluster as cofactor.

It carries out the reaction glycyl-[protein] + reduced [flavodoxin] + S-adenosyl-L-methionine = glycin-2-yl radical-[protein] + semiquinone [flavodoxin] + 5'-deoxyadenosine + L-methionine + H(+). It participates in organosulfur degradation; alkanesulfonate degradation. Functionally, involved in the degradation of the organosulfur compound 2(S)-dihydroxypropanesulfonate (DHPS). Catalyzes activation of the (2S)-3-sulfopropanediol dehydratase HpfG under anaerobic conditions by generation of an organic free radical on a glycine residue. In Klebsiella oxytoca, this protein is (2S)-3-sulfopropanediol dehydratase activating enzyme.